Consider the following 222-residue polypeptide: Secreted protein D (222 aa).

Positions 1–22 (MKIYYLFFVLIYLIYFINLVYC) are cleaved as a signal peptide. N-linked (GlcNAc...) asparagine glycosylation is present at Asn-25.

The protein belongs to the Sct family.

The protein resides in the secreted. This is Secreted protein D from Dictyostelium discoideum (Social amoeba).